A 142-amino-acid chain; its full sequence is HTH-type transcriptional regulator MntR (142 aa).

An HTH dtxR-type domain is found at 1 to 63 (MPTPSMEDYI…YEKYRGLVLT (63 aa)). Mn(2+) contacts are provided by Asp8, Glu11, His77, Glu99, Glu102, and His103.

This sequence belongs to the DtxR/MntR family. In terms of assembly, homodimer.

The protein localises to the cytoplasm. DNA binding is strongly activated by Mn(2+). In terms of biological role, central regulator of manganese homeostasis. The sequence is that of HTH-type transcriptional regulator MntR from Bacillus cereus (strain G9842).